A 124-amino-acid polypeptide reads, in one-letter code: Large ribosomal subunit protein bL20c (124 aa).

The protein belongs to the bacterial ribosomal protein bL20 family.

Its subcellular location is the plastid. The protein localises to the chloroplast. Functionally, binds directly to 23S ribosomal RNA and is necessary for the in vitro assembly process of the 50S ribosomal subunit. It is not involved in the protein synthesizing functions of that subunit. The chain is Large ribosomal subunit protein bL20c (rpl20) from Euglena gracilis.